Reading from the N-terminus, the 669-residue chain is Zinc finger MYM-type protein 5 (669 aa).

Residues Lys88, Lys91, Lys134, Lys149, Lys166, and Lys225 each participate in a glycyl lysine isopeptide (Lys-Gly) (interchain with G-Cter in SUMO2) cross-link. 4 MYM-type zinc fingers span residues 265 to 299, 311 to 351, 358 to 393, and 404 to 431; these read HLFC…KKAN, QEFY…RHEV, HKLC…KSTG, and KRFC…ASEN. Glycyl lysine isopeptide (Lys-Gly) (interchain with G-Cter in SUMO2) cross-links involve residues Lys443, Lys455, Lys462, and Lys552.

Interacts (via N-terminal 120 amino acid region) with ETV5 (via C-terminal).

Its subcellular location is the nucleus. Functionally, functions as a transcriptional regulator. This Homo sapiens (Human) protein is Zinc finger MYM-type protein 5 (ZMYM5).